A 209-amino-acid chain; its full sequence is Mitochondrial import inner membrane translocase subunit Tim23 (209 aa).

3 consecutive transmembrane segments (helical) span residues 73-93 (FELAFFTIGGCCMTGAAFGAL), 125-145 (ALWANTLGSLALLYSAFGVII), and 181-197 (GLAGLTLTSVYALYNNW).

The protein belongs to the Tim17/Tim22/Tim23 family. Component of the TIM23 complex at least composed of TIMM23, TIMM17 (TIMM17A or TIMM17B) and TIMM50; within this complex, directly interacts with TIMM50. The complex interacts with the TIMM44 component of the PAM complex and with DNAJC15. Upon mitochondrial depolarization, interacts with PINK1; the interaction is required for PINK1 accumulation at the outer mitochondrial membrane, kinase activation by autophosphorylation and PRKN recruitement to mitochondria.

Its subcellular location is the mitochondrion inner membrane. Essential component of the TIM23 complex, a complex that mediates the translocation of transit peptide-containing proteins across the mitochondrial inner membrane. Has a role in the activation of stress-induced mitophagy by protecting PINK1 from OMA1-mediated degradation and facilitating its accumulation at the outer mitochondrial membrane in response to depolarization. The sequence is that of Mitochondrial import inner membrane translocase subunit Tim23 (Timm23) from Rattus norvegicus (Rat).